A 536-amino-acid polypeptide reads, in one-letter code: Membrane protein insertase YidC (536 aa).

A helical membrane pass occupies residues I14–P34. The segment at S43 to V69 is disordered. Over residues A53–S68 the composition is skewed to polar residues. Helical transmembrane passes span V312 to L332, W339 to Y359, G401 to I421, W436 to M456, and P484 to V504.

Belongs to the OXA1/ALB3/YidC family. Type 1 subfamily. As to quaternary structure, interacts with the Sec translocase complex via SecD. Specifically interacts with transmembrane segments of nascent integral membrane proteins during membrane integration.

Its subcellular location is the cell inner membrane. In terms of biological role, required for the insertion and/or proper folding and/or complex formation of integral membrane proteins into the membrane. Involved in integration of membrane proteins that insert both dependently and independently of the Sec translocase complex, as well as at least some lipoproteins. Aids folding of multispanning membrane proteins. The protein is Membrane protein insertase YidC of Wolinella succinogenes (strain ATCC 29543 / DSM 1740 / CCUG 13145 / JCM 31913 / LMG 7466 / NCTC 11488 / FDC 602W) (Vibrio succinogenes).